Consider the following 157-residue polypeptide: SUMO-conjugating enzyme UBC9-B (157 aa).

Residues 4 to 157 form the UBC core domain; that stretch reads IALSRLAQER…VRAQAKKFSP (154 aa). The interaction with SUMO1 stretch occupies residues 13–18; that stretch reads RKAWRK. The active-site Glycyl thioester intermediate is the cysteine 93.

The protein belongs to the ubiquitin-conjugating enzyme family. Forms a tight complex with rangap1 and ranbp2. Interacts with vsx1.

The protein localises to the nucleus. It functions in the pathway protein modification; protein sumoylation. Functionally, accepts the ubiquitin-like proteins sumo1, sumo2 and sumo3 from the uble1a-uble1b E1 complex and catalyzes their covalent attachment to other proteins with the help of an E3 ligase such as ranbp2 or cbx4. Essential for nuclear architecture and chromosome segregation. Mediates nuclear localization of vsx1. Required for progression through mitosis during organogenesis. The polypeptide is SUMO-conjugating enzyme UBC9-B (ube2ib) (Danio rerio (Zebrafish)).